The chain runs to 291 residues: Formamidopyrimidine-DNA glycosylase (291 aa).

The Schiff-base intermediate with DNA role is filled by P2. E3 (proton donor) is an active-site residue. The active-site Proton donor; for beta-elimination activity is K58. H100, R123, and K166 together coordinate DNA. The segment at 257–291 (SVYGREGKECLHCGIPIVRILQSGRSSFYCSQCQK) adopts an FPG-type zinc-finger fold. The active-site Proton donor; for delta-elimination activity is the R281.

The protein belongs to the FPG family. As to quaternary structure, monomer. Requires Zn(2+) as cofactor.

It catalyses the reaction Hydrolysis of DNA containing ring-opened 7-methylguanine residues, releasing 2,6-diamino-4-hydroxy-5-(N-methyl)formamidopyrimidine.. The enzyme catalyses 2'-deoxyribonucleotide-(2'-deoxyribose 5'-phosphate)-2'-deoxyribonucleotide-DNA = a 3'-end 2'-deoxyribonucleotide-(2,3-dehydro-2,3-deoxyribose 5'-phosphate)-DNA + a 5'-end 5'-phospho-2'-deoxyribonucleoside-DNA + H(+). Its function is as follows. Involved in base excision repair of DNA damaged by oxidation or by mutagenic agents. Acts as a DNA glycosylase that recognizes and removes damaged bases. Has a preference for oxidized purines, such as 7,8-dihydro-8-oxoguanine (8-oxoG). Has AP (apurinic/apyrimidinic) lyase activity and introduces nicks in the DNA strand. Cleaves the DNA backbone by beta-delta elimination to generate a single-strand break at the site of the removed base with both 3'- and 5'-phosphates. The protein is Formamidopyrimidine-DNA glycosylase of Bartonella henselae (strain ATCC 49882 / DSM 28221 / CCUG 30454 / Houston 1) (Rochalimaea henselae).